Reading from the N-terminus, the 373-residue chain is Nuclear migration protein JNM1 (373 aa).

The interval 33–53 is disordered; sequence EVKEDGQQEEQEEASSRKDGL. At serine 91 the chain carries Phosphoserine. Coiled coils occupy residues 114-139, 200-245, and 331-367; these read KIENLTSEMQTEIKELCEIQSKLATE, EDRK…EFEN, and WLKALNELDKKFDEQEVKIRENMEQIRRKIDTLEDEA.

As to quaternary structure, component of the dynactin complex composed of at least ARP1, JNM1, NIP100 and ARP10. Dynactin comprises a short rod of ARP1 polymers attached to ARP10 at its pointed-end and probably associated with the capping protein at its barbed-end. The rod structure is implicated in dynein cargo binding. A sidearm formed by NIP100 projects from the ARP1 filament and is implicated in motor binding. Interacts with ARP1.

Its subcellular location is the cytoplasm. The protein resides in the cytoskeleton. Its function is as follows. Component of the dynactin complex which assists cytoplasmic dynein by increasing its processivity and by regulation of its cargo binding. The dynactin complex is required for the spindle translocation late in anaphase and is involved in a cell wall synthesis checkpoint. JNM1 is associated with the rod and links it to the projecting sidearm. Required for proper nuclear migration during the mitotic cell cycle and for astral microtubule development. This is Nuclear migration protein JNM1 (JNM1) from Saccharomyces cerevisiae (strain ATCC 204508 / S288c) (Baker's yeast).